Consider the following 205-residue polypeptide: Holliday junction branch migration complex subunit RuvA (205 aa).

The domain I stretch occupies residues 1–64; it reads MIGKLKGVVD…EDQIRLFGFS (64 aa). The tract at residues 65-143 is domain II; it reads SAAERDWFRL…GFSASEPLAA (79 aa). Residues 144–152 are flexible linker; the sequence is QLGGGGVAS. A domain III region spans residues 153 to 205; the sequence is AQGGAAADAVSALVNLGYGVPQANAAIAAALRGAGEGAKTEVLIRLGLKELAK.

The protein belongs to the RuvA family. Homotetramer. Forms an RuvA(8)-RuvB(12)-Holliday junction (HJ) complex. HJ DNA is sandwiched between 2 RuvA tetramers; dsDNA enters through RuvA and exits via RuvB. An RuvB hexamer assembles on each DNA strand where it exits the tetramer. Each RuvB hexamer is contacted by two RuvA subunits (via domain III) on 2 adjacent RuvB subunits; this complex drives branch migration. In the full resolvosome a probable DNA-RuvA(4)-RuvB(12)-RuvC(2) complex forms which resolves the HJ.

The protein localises to the cytoplasm. Functionally, the RuvA-RuvB-RuvC complex processes Holliday junction (HJ) DNA during genetic recombination and DNA repair, while the RuvA-RuvB complex plays an important role in the rescue of blocked DNA replication forks via replication fork reversal (RFR). RuvA specifically binds to HJ cruciform DNA, conferring on it an open structure. The RuvB hexamer acts as an ATP-dependent pump, pulling dsDNA into and through the RuvAB complex. HJ branch migration allows RuvC to scan DNA until it finds its consensus sequence, where it cleaves and resolves the cruciform DNA. The protein is Holliday junction branch migration complex subunit RuvA of Xanthobacter autotrophicus (strain ATCC BAA-1158 / Py2).